We begin with the raw amino-acid sequence, 160 residues long: Transcription elongation factor GreA (160 aa).

The protein belongs to the GreA/GreB family.

Functionally, necessary for efficient RNA polymerase transcription elongation past template-encoded arresting sites. The arresting sites in DNA have the property of trapping a certain fraction of elongating RNA polymerases that pass through, resulting in locked ternary complexes. Cleavage of the nascent transcript by cleavage factors such as GreA or GreB allows the resumption of elongation from the new 3'terminus. GreA releases sequences of 2 to 3 nucleotides. The chain is Transcription elongation factor GreA from Francisella tularensis subsp. tularensis (strain FSC 198).